The primary structure comprises 504 residues: Dolichol kinase sec59 (504 aa).

At methionine 1–glutamine 55 the chain is on the cytoplasmic side. A helical membrane pass occupies residues isoleucine 56–isoleucine 76. Glutamine 77 is a topological domain (lumenal). A helical transmembrane segment spans residues leucine 78–glycine 98. Over glutamate 99–serine 157 the chain is Cytoplasmic. A helical membrane pass occupies residues phenylalanine 158–phenylalanine 178. Topologically, residues serine 179–serine 187 are lumenal. The helical transmembrane segment at valine 188–leucine 208 threads the bilayer. The Cytoplasmic segment spans residues lysine 209–histidine 215. Residues leucine 216–valine 236 form a helical membrane-spanning segment. Residues serine 237 to serine 263 lie on the Lumenal side of the membrane. A helical transmembrane segment spans residues leucine 264–leucine 284. At leucine 285–leucine 325 the chain is on the cytoplasmic side. A helical membrane pass occupies residues aspartate 326–isoleucine 347. Topologically, residues arginine 348–lysine 373 are lumenal. Residues glycine 374 to serine 394 traverse the membrane as a helical segment. Residues asparagine 395–serine 403 lie on the Cytoplasmic side of the membrane. The helical transmembrane segment at valine 404–glycine 424 threads the bilayer. Residues lysine 425–glutamate 440 lie on the Lumenal side of the membrane. A helical membrane pass occupies residues glycine 441 to valine 461. Cysteine 462 is a topological domain (cytoplasmic). A helical membrane pass occupies residues proline 463–valine 483. The Lumenal portion of the chain corresponds to serine 484–aspartate 504.

This sequence belongs to the polyprenol kinase family.

It localises to the endoplasmic reticulum membrane. It carries out the reaction a di-trans,poly-cis-dolichol + CTP = a di-trans,poly-cis-dolichyl phosphate + CDP + H(+). The protein operates within protein modification; protein glycosylation. Catalyzes CTP-mediated phosphorylation of dolichol, the terminal step in de novo dolichyl monophosphate (Dol-P) biosynthesis. Dol-P is a lipid carrier essential for the synthesis of N-linked and O-linked oligosaccharides and for GPI anchors. The polypeptide is Dolichol kinase sec59 (Schizosaccharomyces pombe (strain 972 / ATCC 24843) (Fission yeast)).